The primary structure comprises 337 residues: o-succinylbenzoate synthase (337 aa).

Residue lysine 142 is the Proton donor of the active site. Residues aspartate 170, glutamate 199, and aspartate 222 each coordinate Mg(2+). Catalysis depends on lysine 248, which acts as the Proton acceptor.

It belongs to the mandelate racemase/muconate lactonizing enzyme family. MenC type 1 subfamily. A divalent metal cation is required as a cofactor.

It catalyses the reaction (1R,6R)-6-hydroxy-2-succinyl-cyclohexa-2,4-diene-1-carboxylate = 2-succinylbenzoate + H2O. Its pathway is quinol/quinone metabolism; 1,4-dihydroxy-2-naphthoate biosynthesis; 1,4-dihydroxy-2-naphthoate from chorismate: step 4/7. It functions in the pathway quinol/quinone metabolism; menaquinone biosynthesis. In terms of biological role, converts 2-succinyl-6-hydroxy-2,4-cyclohexadiene-1-carboxylate (SHCHC) to 2-succinylbenzoate (OSB). In Pasteurella multocida (strain Pm70), this protein is o-succinylbenzoate synthase.